The primary structure comprises 607 residues: DNA mismatch repair protein MutL (607 aa).

The protein belongs to the DNA mismatch repair MutL/HexB family.

Its function is as follows. This protein is involved in the repair of mismatches in DNA. It is required for dam-dependent methyl-directed DNA mismatch repair. May act as a 'molecular matchmaker', a protein that promotes the formation of a stable complex between two or more DNA-binding proteins in an ATP-dependent manner without itself being part of a final effector complex. This chain is DNA mismatch repair protein MutL, found in Anaeromyxobacter dehalogenans (strain 2CP-1 / ATCC BAA-258).